The primary structure comprises 345 residues: Viral Fc-gamma receptor-like protein UL119 (345 aa).

An N-terminal signal peptide occupies residues 1–23 (MCSVLAIALVVALLGDMHPGVKS). The interval 23 to 42 (SSTTSAVTSPSNTTVTSTTS) is disordered. Residues 24–294 (STTSAVTSPS…KSDPLFEDRL (271 aa)) lie on the Virion surface side of the membrane. N-linked (GlcNAc...) asparagine; by host glycosylation is found at Asn34, Asn48, Asn95, Asn104, Asn148, Asn179, Asn198, Asn217, Asn225, Asn241, Asn244, and Asn260. In terms of domain architecture, Ig-like V-type spans 91–190 (QVSLNATCKV…TWDLFTYPIY (100 aa)). The helical transmembrane segment at 295 to 317 (LAYGVLAFLVFMVIILLYVTYML) threads the bilayer. Topologically, residues 318 to 345 (ARRRDWSYKRLEEPVEEKKHPVPYFKQW) are intravirion.

The protein localises to the virion membrane. Its function is as follows. Serves as a receptor for the Fc part of human IgG. May thus be involved in interfering with host Ig-mediated immune responses. This chain is Viral Fc-gamma receptor-like protein UL119 (UL119/UL118), found in Human cytomegalovirus (strain AD169) (HHV-5).